A 631-amino-acid polypeptide reads, in one-letter code: Sphingomyelin phosphodiesterase (631 aa).

The interval 1 to 23 (MPRYGASLRQSCPRSGREQGQDG) is disordered. Residues 1 to 46 (MPRYGASLRQSCPRSGREQGQDGTAGAPGLLWMGLVLALALALALA) form the signal peptide. The Saposin B-type domain maps to 87 to 171 (GNLTCPICKG…LLGSTCGHWD (85 aa)). N88 is a glycosylation site (N-linked (GlcNAc...) asparagine). Cystine bridges form between C91–C167, C94–C159, and C122–C133. An N-linked (GlcNAc...) asparagine glycan is attached at N177. 2 residues coordinate Zn(2+): D208 and H210. Intrachain disulfides connect C223–C228 and C229–C252. Zn(2+)-binding residues include D280 and N320. 2 N-linked (GlcNAc...) asparagine glycosylation sites follow: N337 and N397. Cysteines 387 and 433 form a disulfide. Positions 427, 459, and 461 each coordinate Zn(2+). N505 carries an N-linked (GlcNAc...) asparagine glycan. Position 510 is a phosphoserine; by PKC/PRKCD (S510). N522 carries an N-linked (GlcNAc...) asparagine glycan. 2 disulfides stabilise this stretch: C586/C590 and C596/C609.

The protein belongs to the acid sphingomyelinase family. As to quaternary structure, monomer. Interacts with SORT1; the interaction is required for SMPD1 targeting to lysosomes. Requires Zn(2+) as cofactor. Proteolytically processed. Mature lysosomal form arises from C-terminal proteolytic processing of pro-sphingomyelin phosphodiesterase. Post-translationally, this form is generated following cleavage by CASP7 in the extracellular milieu. It shows increased activity. In terms of processing, both lysosomal and secreted forms are glycosylated but they show a differential pattern of glycosylation. Phosphorylated at Ser-510 by PRKCD upon stress stimuli. Phosphorylation is required for secretion.

It localises to the lysosome. It is found in the lipid droplet. The protein resides in the secreted. The protein localises to the extracellular space. It catalyses the reaction a sphingomyelin + H2O = phosphocholine + an N-acylsphing-4-enine + H(+). The enzyme catalyses N-(octadecanoyl)-sphing-4-enine-1-phosphocholine + H2O = N-octadecanoylsphing-4-enine + phosphocholine + H(+). It carries out the reaction 1,2-dihexadecanoyl-sn-glycero-3-phosphocholine + H2O = 1,2-dihexadecanoyl-sn-glycerol + phosphocholine + H(+). The catalysed reaction is a 1,2-diacyl-sn-glycero-3-phosphocholine + H2O = phosphocholine + a 1,2-diacyl-sn-glycerol + H(+). Its activity is regulated as follows. Hydrolysis of liposomal sphingomyelin is stimulated by incorporation of diacylglycerol (DAG), ceramide and free fatty acids into the liposomal membranes. Phosphatidylcholine hydrolysis is inhibited by incorporation of cholesterol, ceramide, DAG, monoacylglycerol and fatty acids. Antidepressants, namely amitriptyline, imipramine, desipramine, fluoxetine, sertraline, escitalopram, and maprotiline inhibit sphingomyelin phosphodiesterase activity. (Microbial infection) The secretory form is activated by P.aeruginosa, this activation results in the release of ceramide in the outer leaflet of the plasma membrane. With respect to regulation, (Microbial infection) The secretory form is activated by human coronavirus SARS-CoV-2, this activation results in the release of ceramide in the outer leaflet of the plasma membrane. In terms of biological role, converts sphingomyelin to ceramide. Exists as two enzymatic forms that arise from alternative trafficking of a single protein precursor, one that is targeted to the endolysosomal compartment, whereas the other is released extracellularly. However, in response to various forms of stress, lysosomal exocytosis may represent a major source of the secretory form. In the lysosomes, converts sphingomyelin to ceramide. Plays an important role in the export of cholesterol from the intraendolysosomal membranes. Also has phospholipase C activities toward 1,2-diacylglycerolphosphocholine and 1,2-diacylglycerolphosphoglycerol. Modulates stress-induced apoptosis through the production of ceramide. Functionally, when secreted, modulates cell signaling with its ability to reorganize the plasma membrane by converting sphingomyelin to ceramide. Secreted form is increased in response to stress and inflammatory mediators such as IL1B, IFNG or TNF as well as upon infection with bacteria and viruses. Produces the release of ceramide in the outer leaflet of the plasma membrane playing a central role in host defense. Ceramide reorganizes these rafts into larger signaling platforms that are required to internalize P.aeruginosa, induce apoptosis and regulate the cytokine response in infected cells. In wounded cells, the lysosomal form is released extracellularly in the presence of Ca(2+) and promotes endocytosis and plasma membrane repair. Its function is as follows. This form is generated following cleavage by CASP7 in the extracellular milieu in response to bacterial infection. It shows increased ability to convert sphingomyelin to ceramide and promotes plasma membrane repair. Plasma membrane repair by ceramide counteracts the action of gasdermin-D (GSDMD) perforin (PRF1) pores that are formed in response to bacterial infection. In terms of biological role, (Microbial infection) Secretion is activated by bacteria such as P.aeruginosa, N.gonorrhoeae and others, this activation results in the release of ceramide in the outer leaflet of the plasma membrane which facilitates the infection. (Microbial infection) Secretion is activated by human coronaviruses SARS-CoV and SARS-CoV-2 as well as Zaire ebolavirus, this activation results in the release of ceramide in the outer leaflet of the plasma membrane which facilitates the infection. Functionally, lacks residues that bind the cofactor Zn(2+) and has no enzyme activity. The protein is Sphingomyelin phosphodiesterase of Homo sapiens (Human).